The primary structure comprises 307 residues: UDP-3-O-acyl-N-acetylglucosamine deacetylase (307 aa).

The Zn(2+) site is built by H80, H239, and D243. The active-site Proton donor is H266.

It belongs to the LpxC family. Zn(2+) is required as a cofactor.

The catalysed reaction is a UDP-3-O-[(3R)-3-hydroxyacyl]-N-acetyl-alpha-D-glucosamine + H2O = a UDP-3-O-[(3R)-3-hydroxyacyl]-alpha-D-glucosamine + acetate. Its pathway is glycolipid biosynthesis; lipid IV(A) biosynthesis; lipid IV(A) from (3R)-3-hydroxytetradecanoyl-[acyl-carrier-protein] and UDP-N-acetyl-alpha-D-glucosamine: step 2/6. Catalyzes the hydrolysis of UDP-3-O-myristoyl-N-acetylglucosamine to form UDP-3-O-myristoylglucosamine and acetate, the committed step in lipid A biosynthesis. This is UDP-3-O-acyl-N-acetylglucosamine deacetylase from Neisseria meningitidis serogroup C (strain 053442).